An 81-amino-acid chain; its full sequence is MSHSVKIYDTCIGCTQCVRACPTDVLEMVPWGGCKAAQIASAPRTEDCVGCKRCESACPTDFLSVRVYLGAETTRSMGLAY.

2 4Fe-4S ferredoxin-type domains span residues 2–31 (SHSVKIYDTCIGCTQCVRACPTDVLEMVPW) and 39–68 (IASAPRTEDCVGCKRCESACPTDFLSVRVY). [4Fe-4S] cluster is bound by residues C11, C14, C17, C21, C48, C51, C54, and C58.

The eukaryotic PSI reaction center is composed of at least 11 subunits. Requires [4Fe-4S] cluster as cofactor.

It is found in the plastid. It localises to the chloroplast thylakoid membrane. The enzyme catalyses reduced [plastocyanin] + hnu + oxidized [2Fe-2S]-[ferredoxin] = oxidized [plastocyanin] + reduced [2Fe-2S]-[ferredoxin]. Functionally, apoprotein for the two 4Fe-4S centers FA and FB of photosystem I (PSI); essential for photochemical activity. FB is the terminal electron acceptor of PSI, donating electrons to ferredoxin. The C-terminus interacts with PsaA/B/D and helps assemble the protein into the PSI complex. Required for binding of PsaD and PsaE to PSI. PSI is a plastocyanin/cytochrome c6-ferredoxin oxidoreductase, converting photonic excitation into a charge separation, which transfers an electron from the donor P700 chlorophyll pair to the spectroscopically characterized acceptors A0, A1, FX, FA and FB in turn. The sequence is that of Photosystem I iron-sulfur center from Nephroselmis olivacea (Green alga).